The chain runs to 304 residues: Oxygen-dependent coproporphyrinogen-III oxidase (304 aa).

Residue S93 participates in substrate binding. 2 residues coordinate a divalent metal cation: H97 and H107. H107 serves as the catalytic Proton donor. Residue 109-111 participates in substrate binding; sequence NVR. H146 and H176 together coordinate a divalent metal cation. The segment at 241-276 is important for dimerization; sequence YVEFNLVYDRGTLFGLQSGGRTESILMSLPPQVRWA. 259–261 is a binding site for substrate; sequence GGR.

Belongs to the aerobic coproporphyrinogen-III oxidase family. In terms of assembly, homodimer. Requires a divalent metal cation as cofactor.

It localises to the cytoplasm. The catalysed reaction is coproporphyrinogen III + O2 + 2 H(+) = protoporphyrinogen IX + 2 CO2 + 2 H2O. The protein operates within porphyrin-containing compound metabolism; protoporphyrin-IX biosynthesis; protoporphyrinogen-IX from coproporphyrinogen-III (O2 route): step 1/1. In terms of biological role, involved in the heme biosynthesis. Catalyzes the aerobic oxidative decarboxylation of propionate groups of rings A and B of coproporphyrinogen-III to yield the vinyl groups in protoporphyrinogen-IX. This chain is Oxygen-dependent coproporphyrinogen-III oxidase, found in Pseudomonas fluorescens (strain Pf0-1).